Here is a 47-residue protein sequence, read N- to C-terminus: Photosystem II reaction center protein K (47 aa).

The propeptide occupies 1–10; sequence MAAFSLDLLA. A helical transmembrane segment spans residues 19 to 39; that stretch reads FGPLIDILPIIPVFFLLLAFV.

Belongs to the PsbK family. In terms of assembly, PSII is composed of 1 copy each of membrane proteins PsbA, PsbB, PsbC, PsbD, PsbE, PsbF, PsbH, PsbI, PsbJ, PsbK, PsbL, PsbM, PsbT, PsbX, PsbY, PsbZ, Psb30/Ycf12, peripheral proteins PsbO, CyanoQ (PsbQ), PsbU, PsbV and a large number of cofactors. It forms dimeric complexes.

It is found in the cellular thylakoid membrane. Functionally, one of the components of the core complex of photosystem II (PSII). PSII is a light-driven water:plastoquinone oxidoreductase that uses light energy to abstract electrons from H(2)O, generating O(2) and a proton gradient subsequently used for ATP formation. It consists of a core antenna complex that captures photons, and an electron transfer chain that converts photonic excitation into a charge separation. This chain is Photosystem II reaction center protein K, found in Synechococcus sp. (strain WH7803).